A 60-amino-acid chain; its full sequence is Putative transcriptional regulator XtpA (60 aa).

In terms of biological role, controls the expression of small non-coding RNA GcvB, which represses the expression of many amino acid transporter proteins and uptake of aminoglycoside antibiotics in cells. Might be a transcriptional activator. An RNA (xtr) with a tRNA-like fold possibly derived from tRNA-Arg(UCG) is encoded entirely within the protein; xtr does not have the sequence corresponding to tRNA anticodon or variable arms. 10 synonymous codon changes in the xtr region of xtpA have the same phenotype as a deletion mutation, suggesting the mRNA secondary structure is important for function. The protein is Putative transcriptional regulator XtpA of Escherichia coli (strain K12).